A 412-amino-acid polypeptide reads, in one-letter code: MNAEIIAVGTELLLGQIANTNAQFLSEKLASIGINVYYHTVVGDNNKRLQKAIEAAEERADILIFTGGLGPTKDDLTKETIAASLDEALVYDEKALALISNYFKRTGREFTENNKKQALVLNGATVFANDHGMAPGMGVNKNGKVYILLPGPPKEMKPMYVSYVEPFLRNFTTGENIYSRVLRFFGIGESQLEVKVQDLIDGQTNPTIAPLANDGEVTLRLTAKHQNVSEAEKLIQHVEDLILERVGEFFYGYDQEFLHYKAIELLKRKGLTLACAESLTGGLFGNQVTENAGVSSVFKGGVICYHNDVKQHVLRVPEEVLHTDGAVSKECAHYLAENVKDLLKADIGISFTGVAGPDASEQKEPGTVFVGLAIKGEQTAVFPLNLSGSRQQIRERSTKYGFYHLYKKLEEI.

The protein belongs to the CinA family.

The protein is Putative competence-damage inducible protein of Bacillus cereus (strain G9842).